A 358-amino-acid chain; its full sequence is UDP-N-acetylglucosamine--N-acetylmuramyl-(pentapeptide) pyrophosphoryl-undecaprenol N-acetylglucosamine transferase (358 aa).

Residues 11–13 (TGG), N120, R161, S188, and Q282 contribute to the UDP-N-acetyl-alpha-D-glucosamine site.

It belongs to the glycosyltransferase 28 family. MurG subfamily.

It is found in the cell inner membrane. It catalyses the reaction di-trans,octa-cis-undecaprenyl diphospho-N-acetyl-alpha-D-muramoyl-L-alanyl-D-glutamyl-meso-2,6-diaminopimeloyl-D-alanyl-D-alanine + UDP-N-acetyl-alpha-D-glucosamine = di-trans,octa-cis-undecaprenyl diphospho-[N-acetyl-alpha-D-glucosaminyl-(1-&gt;4)]-N-acetyl-alpha-D-muramoyl-L-alanyl-D-glutamyl-meso-2,6-diaminopimeloyl-D-alanyl-D-alanine + UDP + H(+). The protein operates within cell wall biogenesis; peptidoglycan biosynthesis. Cell wall formation. Catalyzes the transfer of a GlcNAc subunit on undecaprenyl-pyrophosphoryl-MurNAc-pentapeptide (lipid intermediate I) to form undecaprenyl-pyrophosphoryl-MurNAc-(pentapeptide)GlcNAc (lipid intermediate II). This chain is UDP-N-acetylglucosamine--N-acetylmuramyl-(pentapeptide) pyrophosphoryl-undecaprenol N-acetylglucosamine transferase, found in Synechococcus sp. (strain WH7803).